Here is a 194-residue protein sequence, read N- to C-terminus: MSSILIAVIAIAALALVFGLILGFASIKFKVESDPIVEQIDAILPQTQCGQCGYPGCKPYAEAIANGDMINKCPPGGQATIEKLADLMGVDVPSSAHDEEKSIKKVAFIHEDMCIGCTKCIQACPVDAIVGGTKALHTVIESECTGCDLCVAPCPTDCIEMIPVKTTPDNWKWDLNTIPVVNISTDQPSKSSEL.

Residues 1-26 (MSSILIAVIAIAALALVFGLILGFAS) form a hydrophobic region. The 59-residue stretch at 32-90 (ESDPIVEQIDAILPQTQCGQCGYPGCKPYAEAIANGDMINKCPPGGQATIEKLADLMGV) folds into the 4Fe-4S domain. [4Fe-4S] cluster-binding residues include cysteine 49, cysteine 52, cysteine 57, cysteine 73, cysteine 114, cysteine 117, cysteine 120, cysteine 124, cysteine 144, cysteine 147, cysteine 150, and cysteine 154. 4Fe-4S ferredoxin-type domains lie at 105 to 134 (KVAFIHEDMCIGCTKCIQACPVDAIVGGTK) and 135 to 164 (ALHTVIESECTGCDLCVAPCPTDCIEMIPV).

Belongs to the 4Fe4S bacterial-type ferredoxin family. RnfB subfamily. As to quaternary structure, the complex is composed of six subunits: RnfA, RnfB, RnfC, RnfD, RnfE and RnfG. Requires [4Fe-4S] cluster as cofactor.

The protein resides in the cell inner membrane. Functionally, part of a membrane-bound complex that couples electron transfer with translocation of ions across the membrane. The sequence is that of Ion-translocating oxidoreductase complex subunit B from Aliivibrio fischeri (strain ATCC 700601 / ES114) (Vibrio fischeri).